A 1093-amino-acid chain; its full sequence is Small G protein signaling modulator 1 (1093 aa).

Residues 36–190 (HEDSSHIISF…EYTKMKTADH (155 aa)) enclose the RUN domain. Residues 256–297 (LLYGKNNVLVQPRDDMEAVPGYLSLHQTADVMTLKWTPNQLM) are important for interaction with RAB9A and RAB9B. Positions 301 to 350 (VGDLDYEKSVYWDYAVTIRLEEIVYLHCHQQVDSGGTVVLVSQDGIQRPP) are required for interaction with RAP family members. 3 disordered regions span residues 377–412 (DPPLWSQRGKGKVFPKLRKRSPQGSSESTSSDKEDD), 645–778 (DSTI…ELAV), and 810–838 (DGAVMDGWPGEADKPSRADSEDNLSEEPE). A compositionally biased stretch (basic residues) spans 385-397 (GKGKVFPKLRKRS). Positions 562–1026 (GVQPEIRRAV…SVWETIWAAK (465 aa)) constitute a Rab-GAP TBC domain. Positions 647-676 (TISNESSQSCSSGRQNLRLQSDSSSSTQVF) are enriched in polar residues. Residues 687 to 696 (AEGRSEEKHP) show a composition bias toward basic and acidic residues. Polar residues predominate over residues 702 to 736 (NPANGTCSPDSGHPSSHNFSSGLSEHSEPSLSTED). Basic and acidic residues-rich tracts occupy residues 766 to 776 (TSRDEAPREEL) and 820 to 829 (EADKPSRADS).

The protein belongs to the RUTBC family. In terms of assembly, interacts with RAB9A (GTP-bound form) and RAB9B. Interacts with RAB3A, RAB4A, RAB5A, RAB8A, RAB11A, RAP1A, RAP1B, RAP2A and RAP2B. No interaction with RAB27A. Expressed only in brain.

It is found in the golgi apparatus. The protein localises to the trans-Golgi network. The protein resides in the cytoplasm. Its subcellular location is the cytoplasmic vesicle membrane. In terms of biological role, interacts with numerous Rab family members, functioning as Rab effector for some, and as GTPase activator for others. Promotes GTP hydrolysis by RAB34 and RAB36. Probably functions as a GTPase effector with RAB9A and RAB9B; does not stimulate GTP hydrolysis with RAB9A and RAB9B. This Mus musculus (Mouse) protein is Small G protein signaling modulator 1 (Sgsm1).